Here is a 238-residue protein sequence, read N- to C-terminus: Ribonuclease PH (238 aa).

Phosphate contacts are provided by residues arginine 86 and 124-126; that span reads GTR.

This sequence belongs to the RNase PH family. Homohexameric ring arranged as a trimer of dimers.

The catalysed reaction is tRNA(n+1) + phosphate = tRNA(n) + a ribonucleoside 5'-diphosphate. Functionally, phosphorolytic 3'-5' exoribonuclease that plays an important role in tRNA 3'-end maturation. Removes nucleotide residues following the 3'-CCA terminus of tRNAs; can also add nucleotides to the ends of RNA molecules by using nucleoside diphosphates as substrates, but this may not be physiologically important. Probably plays a role in initiation of 16S rRNA degradation (leading to ribosome degradation) during starvation. The sequence is that of Ribonuclease PH from Salmonella choleraesuis (strain SC-B67).